The sequence spans 327 residues: 4-hydroxyproline 2-epimerase (327 aa).

The active-site Proton acceptor is the cysteine 85. Residues 86 to 87, histidine 205, and aspartate 231 each bind substrate; that span reads GH. The active-site Proton donor is cysteine 235. 236–237 provides a ligand contact to substrate; that stretch reads GT.

Belongs to the proline racemase family.

It carries out the reaction trans-4-hydroxy-L-proline = cis-4-hydroxy-D-proline. Functionally, catalyzes the epimerization of trans-4-hydroxy-L-proline (t4LHyp) to cis-4-hydroxy-D-proline (c4DHyp). Displays no proline racemase activity. The sequence is that of 4-hydroxyproline 2-epimerase from Roseibium alexandrii (strain DSM 17067 / NCIMB 14079 / DFL-11) (Labrenzia alexandrii).